We begin with the raw amino-acid sequence, 484 residues long: Glycogen synthase (484 aa).

Lys15 lines the ADP-alpha-D-glucose pocket.

The protein belongs to the glycosyltransferase 1 family. Bacterial/plant glycogen synthase subfamily.

The enzyme catalyses [(1-&gt;4)-alpha-D-glucosyl](n) + ADP-alpha-D-glucose = [(1-&gt;4)-alpha-D-glucosyl](n+1) + ADP + H(+). It participates in glycan biosynthesis; glycogen biosynthesis. Functionally, synthesizes alpha-1,4-glucan chains using ADP-glucose. The chain is Glycogen synthase from Geotalea daltonii (strain DSM 22248 / JCM 15807 / FRC-32) (Geobacter daltonii).